Consider the following 299-residue polypeptide: Fluorinase (299 aa).

S-adenosyl-L-methionine-binding positions include Asp-16, 21 to 23, Tyr-77, Ser-158, Asp-210, Asn-215, 269 to 270, and 277 to 279; these read DDS, SR, and RNA.

Homohexamer; dimers of trimer.

It carries out the reaction fluoride + S-adenosyl-L-methionine = 5'-deoxy-5'-fluoroadenosine + L-methionine. Its activity is regulated as follows. Competitively inhibited by S-adenosyl-L-homocysteine (AdoHcy) and S-adenosyl-L-homocysteine (SAH). Sinefungin is only weakly inhibitory. Involved in the biosynthesis of fluorometabolites. Catalyzes the formation of a C-F bond by combining S-adenosyl-L-methionine (SAM) and fluoride to generate 5'-fluoro-5'-deoxyadenosine (5'-FDA) and L-methionine. It can also use 2'-deoxyadenosine in place of adenosine as substrate. In Streptantibioticus cattleyicolor (Streptomyces cattleya), this protein is Fluorinase.